Here is an 84-residue protein sequence, read N- to C-terminus: Cell division topological specificity factor (84 aa).

Belongs to the MinE family.

Prevents the cell division inhibition by proteins MinC and MinD at internal division sites while permitting inhibition at polar sites. This ensures cell division at the proper site by restricting the formation of a division septum at the midpoint of the long axis of the cell. This Burkholderia ambifaria (strain MC40-6) protein is Cell division topological specificity factor.